Here is a 417-residue protein sequence, read N- to C-terminus: 1-deoxy-D-xylulose 5-phosphate reductoisomerase (417 aa).

NADPH contacts are provided by Thr10, Gly11, Ser12, Ile13, Gly36, Arg37, Asn38, and Asn130. Lys131 provides a ligand contact to 1-deoxy-D-xylulose 5-phosphate. Glu132 contacts NADPH. Asp156 serves as a coordination point for Mn(2+). Residues Ser157, Glu158, Ser194, and His217 each contribute to the 1-deoxy-D-xylulose 5-phosphate site. Glu158 contacts Mn(2+). Gly223 contacts NADPH. Residues Ser230, Asn235, Lys236, and Glu239 each contribute to the 1-deoxy-D-xylulose 5-phosphate site. Residue Glu239 participates in Mn(2+) binding.

Belongs to the DXR family. It depends on Mg(2+) as a cofactor. The cofactor is Mn(2+).

The enzyme catalyses 2-C-methyl-D-erythritol 4-phosphate + NADP(+) = 1-deoxy-D-xylulose 5-phosphate + NADPH + H(+). It functions in the pathway isoprenoid biosynthesis; isopentenyl diphosphate biosynthesis via DXP pathway; isopentenyl diphosphate from 1-deoxy-D-xylulose 5-phosphate: step 1/6. Its function is as follows. Catalyzes the NADPH-dependent rearrangement and reduction of 1-deoxy-D-xylulose-5-phosphate (DXP) to 2-C-methyl-D-erythritol 4-phosphate (MEP). This is 1-deoxy-D-xylulose 5-phosphate reductoisomerase from Synechococcus sp. (strain CC9902).